The following is a 436-amino-acid chain: Histone acetyltransferase type B subunit 2 (436 aa).

WD repeat units follow at residues D136–T176, G187–K227, H237–A277, Q284–H324, and S328–T368. Positions E370 to D374 are interaction with the histone H4 N-terminus. The stretch at G385–D425 is one WD 6 repeat.

Belongs to the WD repeat RBAP46/RBAP48/MSI1 family. Component of the HAT-B complex composed of at least hat1 and hat2. The HAT-B complex binds to histone H4 tail.

The protein localises to the cytoplasm. Its subcellular location is the nucleus. Its function is as follows. Regulatory subunit of the histone acetylase B (HAT-B) complex. The complex acetylates 'Lys-12' of histone H4 which is required for telomeric silencing. The sequence is that of Histone acetyltransferase type B subunit 2 (hat2) from Aspergillus fumigatus (strain ATCC MYA-4609 / CBS 101355 / FGSC A1100 / Af293) (Neosartorya fumigata).